The primary structure comprises 621 residues: uncharacterized protein (621 aa).

4 stretches are compositionally biased toward low complexity: residues 1–10 (MIEDNINNNE), 63–79 (TEPL…TTPS), 137–182 (NNNN…NNFN), and 309–347 (NQSI…NNNN). 7 disordered regions span residues 1–29 (MIED…DKNN), 63–100 (TEPL…SNKT), 135–194 (DDNN…KDND), 307–374 (KTNQ…EDDT), 430–471 (YNNN…IAKR), 492–539 (KQSQ…IKII), and 594–614 (PTQI…SPSK). The span at 348 to 357 (STLTSSNSLS) shows a compositional bias: polar residues. Low complexity-rich tracts occupy residues 431–459 (NNNN…NNNN), 496–539 (NNNN…IKII), and 597–613 (INSN…SSPS).

This is an uncharacterized protein from Dictyostelium discoideum (Social amoeba).